We begin with the raw amino-acid sequence, 317 residues long: tRNA-cytidine(32) 2-sulfurtransferase (317 aa).

A disordered region spans residues 1–29; the sequence is MNTANNTLPTAADWAGEDGAPDAADTRKI. The PP-loop motif signature appears at 65 to 70; it reads SGGKDS. [4Fe-4S] cluster-binding residues include C140, C143, and C231.

The protein belongs to the TtcA family. Homodimer. The cofactor is Mg(2+). Requires [4Fe-4S] cluster as cofactor.

It localises to the cytoplasm. It catalyses the reaction cytidine(32) in tRNA + S-sulfanyl-L-cysteinyl-[cysteine desulfurase] + AH2 + ATP = 2-thiocytidine(32) in tRNA + L-cysteinyl-[cysteine desulfurase] + A + AMP + diphosphate + H(+). The protein operates within tRNA modification. Its function is as follows. Catalyzes the ATP-dependent 2-thiolation of cytidine in position 32 of tRNA, to form 2-thiocytidine (s(2)C32). The sulfur atoms are provided by the cysteine/cysteine desulfurase (IscS) system. The protein is tRNA-cytidine(32) 2-sulfurtransferase of Acidovorax ebreus (strain TPSY) (Diaphorobacter sp. (strain TPSY)).